The primary structure comprises 165 residues: MRDVHIDKVVVHMGVGESGEKLVKAENIMKTITKQTPIRSVAKMTQPAFNIRKGAPIGCKVTLRGKPAEDFIKTSLNIVNKTIFESQFDKSGNFSFGIEEHTDFPGMSYDPQIGIFGMDINVVLERNGIRITRRRMQKKKLPEKQRVKKEDAIAFLKKEYSVEVR.

This sequence belongs to the universal ribosomal protein uL5 family. In terms of assembly, part of the 50S ribosomal subunit; contacts the 5S rRNA and probably tRNA. Forms a bridge to the 30S subunit in the 70S ribosome.

This is one of the proteins that bind and probably mediate the attachment of the 5S RNA into the large ribosomal subunit, where it forms part of the central protuberance. In the 70S ribosome it contacts protein S13 of the 30S subunit (bridge B1b), connecting the 2 subunits; this bridge is implicated in subunit movement. May contact the P site tRNA; the 5S rRNA and some of its associated proteins might help stabilize positioning of ribosome-bound tRNAs. This chain is Large ribosomal subunit protein uL5, found in Methanoregula boonei (strain DSM 21154 / JCM 14090 / 6A8).